The sequence spans 474 residues: Chromosomal replication initiator protein DnaA (474 aa).

Positions 1–73 (MTNIEQERWS…LSCWQAEMPE (73 aa)) are domain I, interacts with DnaA modulators. Residues 73–130 (EVHRIDLTVRTAMRCAAPAKEQAAPIEPRREDNRAAAHDLRVSATAPVSANHEALGGS) are domain II. The tract at residues 131–353 (PLDPRLTFSS…GAINRLLAHS (223 aa)) is domain III, AAA+ region. Residues Gly178, Gly180, Lys181, and Thr182 each contribute to the ATP site. Residues 354–474 (KLNAQPVTLE…VESLKRQLQE (121 aa)) are domain IV, binds dsDNA.

The protein belongs to the DnaA family. Oligomerizes as a right-handed, spiral filament on DNA at oriC.

The protein localises to the cytoplasm. Plays an essential role in the initiation and regulation of chromosomal replication. ATP-DnaA binds to the origin of replication (oriC) to initiate formation of the DNA replication initiation complex once per cell cycle. Binds the DnaA box (a 9 base pair repeat at the origin) and separates the double-stranded (ds)DNA. Forms a right-handed helical filament on oriC DNA; dsDNA binds to the exterior of the filament while single-stranded (ss)DNA is stabiized in the filament's interior. The ATP-DnaA-oriC complex binds and stabilizes one strand of the AT-rich DNA unwinding element (DUE), permitting loading of DNA polymerase. After initiation quickly degrades to an ADP-DnaA complex that is not apt for DNA replication. Binds acidic phospholipids. This Rhodopseudomonas palustris (strain BisA53) protein is Chromosomal replication initiator protein DnaA.